A 207-amino-acid chain; its full sequence is dITP/XTP pyrophosphatase (207 aa).

7–12 provides a ligand contact to substrate; sequence SNNAKK. The active-site Proton acceptor is the Asp72. Asp72 contacts Mg(2+). Residues Ser73, 155–158, Lys183, and 188–189 contribute to the substrate site; these read FGYD and HR.

Belongs to the HAM1 NTPase family. Homodimer. Mg(2+) serves as cofactor.

The enzyme catalyses XTP + H2O = XMP + diphosphate + H(+). It catalyses the reaction dITP + H2O = dIMP + diphosphate + H(+). It carries out the reaction ITP + H2O = IMP + diphosphate + H(+). Its function is as follows. Pyrophosphatase that catalyzes the hydrolysis of nucleoside triphosphates to their monophosphate derivatives, with a high preference for the non-canonical purine nucleotides XTP (xanthosine triphosphate), dITP (deoxyinosine triphosphate) and ITP. Seems to function as a house-cleaning enzyme that removes non-canonical purine nucleotides from the nucleotide pool, thus preventing their incorporation into DNA/RNA and avoiding chromosomal lesions. The polypeptide is dITP/XTP pyrophosphatase (Corynebacterium diphtheriae (strain ATCC 700971 / NCTC 13129 / Biotype gravis)).